We begin with the raw amino-acid sequence, 130 residues long: Chorion class B protein PC10 (130 aa).

A left arm region spans residues 1–22 (GAWNGRLGCGCGGIAPAAELAA). The interval 23–93 (SYGGGLGVAS…GNGALGITAE (71 aa)) is central domain. The tract at residues 94-130 (RGYGAGIGYEGLGLGYGAGIGYKGYGLGGCGCGCGRL) is right arm (Gly-rich tandem repeats).

The protein belongs to the chorion protein family.

In terms of biological role, this protein is one of many from the eggshell of the silk moth. In Antheraea polyphemus (Polyphemus moth), this protein is Chorion class B protein PC10.